The following is a 123-amino-acid chain: MDLAGICSSFQSDLDFCPDCGSVLPLPGVQDAVACTRCGFSINVRDFEGKVVKTSVVFNKLGTAMPLSMEEGPEFQGPVVDRRCSRCGHEGMAYHTRQMRSADEGQTVFYTCTNCKFQEKEDS.

Zn(2+) contacts are provided by Cys17, Cys20, Cys35, Cys38, Cys84, and Cys87. The C4-type zinc finger occupies Cys17–Cys38. Residues Val80–Lys120 form a TFIIS-type zinc finger. Residues Asp103–Glu104 carry the Hairpin motif. Positions 112 and 115 each coordinate Zn(2+).

This sequence belongs to the archaeal RpoM/eukaryotic RPA12/RPB9/RPC11 RNA polymerase family. In terms of assembly, component of the RNA polymerase I (Pol I) complex consisting of at least 13 subunits.

Its subcellular location is the nucleus. It is found in the nucleolus. In terms of biological role, core component of RNA polymerase I (Pol I), a DNA-dependent RNA polymerase which synthesizes ribosomal RNA precursors using the four ribonucleoside triphosphates as substrates. Can mediate Pol I proofreading of the nascent RNA transcript. Anchors into the Pol I active site to monitor transcription fidelity and cleave mis-incorporated 5'-ribonucleotides. The protein is DNA-directed RNA polymerase I subunit RPA12 of Bos taurus (Bovine).